Here is a 520-residue protein sequence, read N- to C-terminus: GMP synthase [glutamine-hydrolyzing] (520 aa).

A Glutamine amidotransferase type-1 domain is found at serine 9–aspartate 202. The active-site Nucleophile is the cysteine 86. Residues histidine 176 and glutamate 178 contribute to the active site. Residues tryptophan 203–arginine 395 form the GMPS ATP-PPase domain. Residue serine 230–serine 236 participates in ATP binding.

Homodimer.

The enzyme catalyses XMP + L-glutamine + ATP + H2O = GMP + L-glutamate + AMP + diphosphate + 2 H(+). It participates in purine metabolism; GMP biosynthesis; GMP from XMP (L-Gln route): step 1/1. Its function is as follows. Catalyzes the synthesis of GMP from XMP. The sequence is that of GMP synthase [glutamine-hydrolyzing] from Rhizobium johnstonii (strain DSM 114642 / LMG 32736 / 3841) (Rhizobium leguminosarum bv. viciae).